A 377-amino-acid chain; its full sequence is Protein ECM9 (377 aa).

Its function is as follows. May be involved in cell wall organization and biogenesis. This Saccharomyces cerevisiae (strain ATCC 204508 / S288c) (Baker's yeast) protein is Protein ECM9 (ECM9).